The primary structure comprises 164 residues: UPF0304 protein YfbU (164 aa).

Belongs to the UPF0304 family.

This Shigella flexneri protein is UPF0304 protein YfbU.